The following is a 198-amino-acid chain: Small ribosomal subunit protein uS7 (198 aa).

The protein belongs to the universal ribosomal protein uS7 family. In terms of assembly, part of the 30S ribosomal subunit.

Functionally, one of the primary rRNA binding proteins, it binds directly to 16S rRNA where it nucleates assembly of the head domain of the 30S subunit. Is located at the subunit interface close to the decoding center. This chain is Small ribosomal subunit protein uS7, found in Desulfurococcus mucosus (Desulfurococcus mobilis).